Consider the following 388-residue polypeptide: 1D-myo-inositol 2-acetamido-2-deoxy-alpha-D-glucopyranoside deacetylase (388 aa).

Positions 6, 9, and 144 each coordinate Zn(2+). The tract at residues 369–388 is disordered; that stretch reads LDQADEGAAHDTSEQSGQRR.

Belongs to the MshB deacetylase family. The cofactor is Zn(2+).

The enzyme catalyses 1D-myo-inositol 2-acetamido-2-deoxy-alpha-D-glucopyranoside + H2O = 1D-myo-inositol 2-amino-2-deoxy-alpha-D-glucopyranoside + acetate. In terms of biological role, catalyzes the deacetylation of 1D-myo-inositol 2-acetamido-2-deoxy-alpha-D-glucopyranoside (GlcNAc-Ins) in the mycothiol biosynthesis pathway. This Corynebacterium kroppenstedtii (strain DSM 44385 / JCM 11950 / CIP 105744 / CCUG 35717) protein is 1D-myo-inositol 2-acetamido-2-deoxy-alpha-D-glucopyranoside deacetylase.